The sequence spans 125 residues: Glycoprotein hormones alpha chain (125 aa).

An N-terminal signal peptide occupies residues methionine 1 to serine 30. 5 cysteine pairs are disulfide-bonded: cysteine 41–cysteine 64, cysteine 44–cysteine 93, cysteine 61–cysteine 114, cysteine 65–cysteine 116, and cysteine 92–cysteine 119. N-linked (GlcNAc...) asparagine glycosylation is found at asparagine 85 and asparagine 110.

This sequence belongs to the glycoprotein hormones subunit alpha family. In terms of assembly, heterodimer. Glycoprotein hormones are heterodimers composed of a common alpha chain described here and a unique beta chain which confers their biological specificity to the different hormones.

The protein localises to the secreted. Functionally, shared alpha chain of heterodimeric glycoprotein hormones. These hormones bind specific receptors on target cells that in turn activate downstream signaling pathways. Involved in gametogenesis and steroidogenesis. This is Glycoprotein hormones alpha chain (cga) from Fundulus heteroclitus (Killifish).